The following is a 390-amino-acid chain: Elongation factor Tu 2 (390 aa).

Positions 10-201 constitute a tr-type G domain; it reads KPHVNVGTIG…LDDYVEVPPR (192 aa). A G1 region spans residues 19–26; the sequence is GHVDHGKT. GTP is bound at residue 19–26; that stretch reads GHVDHGKT. Thr26 is a Mg(2+) binding site. Residues 55–59 form a G2 region; that stretch reads GITIA. The G3 stretch occupies residues 76–79; the sequence is DCPG. GTP contacts are provided by residues 76 to 80 and 131 to 134; these read DCPGH and NKAD. The tract at residues 131 to 134 is G4; the sequence is NKAD. The tract at residues 168–170 is G5; it reads SAL.

Belongs to the TRAFAC class translation factor GTPase superfamily. Classic translation factor GTPase family. EF-Tu/EF-1A subfamily. Monomer.

The protein resides in the cytoplasm. It catalyses the reaction GTP + H2O = GDP + phosphate + H(+). In terms of biological role, GTP hydrolase that promotes the GTP-dependent binding of aminoacyl-tRNA to the A-site of ribosomes during protein biosynthesis. This Wolbachia sp. subsp. Brugia malayi (strain TRS) protein is Elongation factor Tu 2.